Here is a 493-residue protein sequence, read N- to C-terminus: MMSEPKRLHPVAVILNLCHTIIQTIKNIILPFFFVYIVNSNHTVRFYGAIALGVLFIWLVAASIIKWRRFTYRIEDDEFRIEEGLFVTKKRYISIDRIQTMNTSAGLVQQIFKLVKLQIETAGGGKEAEAVLSAISVEEAERIKEAVFKKKAQRRENELDEERLEAEEELDPSVEVQEHYRMNAKELLMAASTSGGIGVIISAVFALISQLDEVLPMDWLFDKFSFLQHASIGIYAVLIFIGLFIAWIFSIAGMMFRYANFQIIKKEQELVISRGIIEKHQVTIPLRKIQAIKIKENIIRQLFGFVTVSIVSAGGGDREKEEGALTILFPMIHKKKLPHMLRTFTPEYTLEENCRRLPRRALKRYLFRSVIFSLFLIIPLCIFFQPWGYLSVILLPIELLFGYLAYKEAAWTINGDRLQLTSRFIGRTTAIVLKKRMQVCKFSQSYFQKKGRLYTISTSVKSSSHMEELTVRDVGEEDAAFILKWYSYEKADG.

The next 6 membrane-spanning stretches (helical) occupy residues 18 to 38 (CHTI…VYIV), 46 to 66 (FYGA…SIIK), 188 to 208 (LMAA…FALI), 232 to 252 (IGIY…FSIA), 370 to 390 (VIFS…WGYL), and 393 to 413 (ILLP…AWTI).

Belongs to the UPF0699 family.

It is found in the cell membrane. The protein is UPF0699 transmembrane protein YdbT (ydbT) of Bacillus subtilis (strain 168).